A 140-amino-acid chain; its full sequence is MAKKVKAIVKLQIPAGKANPAPPIGPALGQHGINIMGFCKEYNERTASMVGTIVPAEITIYDDRSFTFITKTPPAADLLKKAAGVTSGSGTPSKSVVAVISKGQLREIASVKMKDLNAVDIEGAERIIEGTARSMGIKVE.

The protein belongs to the universal ribosomal protein uL11 family. As to quaternary structure, part of the ribosomal stalk of the 50S ribosomal subunit. Interacts with L10 and the large rRNA to form the base of the stalk. L10 forms an elongated spine to which L12 dimers bind in a sequential fashion forming a multimeric L10(L12)X complex. One or more lysine residues are methylated.

Forms part of the ribosomal stalk which helps the ribosome interact with GTP-bound translation factors. In Dehalococcoides mccartyi (strain ATCC BAA-2100 / JCM 16839 / KCTC 5957 / BAV1), this protein is Large ribosomal subunit protein uL11.